Consider the following 493-residue polypeptide: Cobyric acid synthase (493 aa).

The 168-residue stretch at 260–427 (RLSVAAIRLP…RHGYLQDDPA (168 aa)) folds into the GATase cobBQ-type domain. His-419 is an active-site residue.

It belongs to the CobB/CobQ family. CobQ subfamily.

It functions in the pathway cofactor biosynthesis; adenosylcobalamin biosynthesis. Functionally, catalyzes amidations at positions B, D, E, and G on adenosylcobyrinic A,C-diamide. NH(2) groups are provided by glutamine, and one molecule of ATP is hydrogenolyzed for each amidation. The polypeptide is Cobyric acid synthase (Corynebacterium efficiens (strain DSM 44549 / YS-314 / AJ 12310 / JCM 11189 / NBRC 100395)).